Consider the following 555-residue polypeptide: Meiotic mRNA stability protein kinase SSN3 (555 aa).

The 389-residue stretch at Tyr-75–Phe-463 folds into the Protein kinase domain. Position 81–89 (Ile-81–Val-89) interacts with ATP. A compositionally biased stretch (polar residues) spans Thr-100–Leu-138. The tract at residues Thr-100–Ser-166 is disordered. Lys-183 is a binding site for ATP. The active-site Proton acceptor is the Asp-286.

Belongs to the protein kinase superfamily. CMGC Ser/Thr protein kinase family. CDC2/CDKX subfamily. Component of the SRB8-11 complex which consists of SRB8, SSN2/SRB9, SSN3/SRB10 and SSN8/SRB11. The SRB8-11 complex associates with the Mediator complex. The SSN3/SRB10 and SSN8/SRB11 kinase-cyclin pair also associate with the RNA polymerase II holoenzyme. Interacts with TUP1.

The protein localises to the nucleus. It catalyses the reaction L-seryl-[protein] + ATP = O-phospho-L-seryl-[protein] + ADP + H(+). It carries out the reaction L-threonyl-[protein] + ATP = O-phospho-L-threonyl-[protein] + ADP + H(+). The catalysed reaction is [DNA-directed RNA polymerase] + ATP = phospho-[DNA-directed RNA polymerase] + ADP + H(+). Functionally, component of the SRB8-11 complex. The SRB8-11 complex is a regulatory module of the Mediator complex which is itself involved in regulation of basal and activated RNA polymerase II-dependent transcription. The SRB8-11 complex may be involved in the transcriptional repression of a subset of genes regulated by Mediator. It may inhibit the association of the Mediator complex with RNA polymerase II to form the holoenzyme complex. The SRB8-11 complex phosphorylates the C-terminal domain (CTD) of the largest subunit of RNA polymerase II RPB1 at serines 2 and 5. The SSN3/SRB10 and SSN8/SRB11 kinase-cyclin pair may also positively and negatively regulate numerous transcriptional activators in response to changes in nutritional and physiological conditions. Phosphorylates GCN4, promoting its ubiquitin-mediated degradation, and MSN2, promoting its nuclear exclusion. Phosphorylates STE12, thereby promoting its degradation and inhibition of filamentous growth. Phosphorylates GAL4, and this phosphorylation is required for efficient galactose-inducible transcription. Also phosphorylates BDF1 and the TAF2 subunit of the TFIID complex. The chain is Meiotic mRNA stability protein kinase SSN3 (SSN3) from Saccharomyces cerevisiae (strain ATCC 204508 / S288c) (Baker's yeast).